The primary structure comprises 81 residues: Small cysteine-rich protein 1 1 (81 aa).

The signal sequence occupies residues 1–19 (MGVHFNICLLLLLVATISS). The propeptide occupies 20 to 39 (QTLKATEKDDSTDENPFGIY).

This sequence belongs to the Cnidaria small cysteine-rich protein (SCRiP) family. alpha subfamily. In terms of processing, the basic myotoxic domain of rattlesnake crotamine toxins (with 6 Cys residues) has been detected in this protein. However, this protein contains 2 additional Cys at the C-terminal region. Hence, this protein may contain 4 disulfide bonds instead of the 3 suggested by the myotoxin domain.

It localises to the secreted. Its subcellular location is the nematocyst. In terms of biological role, induces neurotoxic symptoms on zebrafish. Has also been claimed to be implied in calcification, but tests on homolog proteins suggest that proteins of this family have a neurotoxic function and not a calcification function. The protein is Small cysteine-rich protein 1 1 of Montipora capitata (Rice coral).